The chain runs to 118 residues: Large ribosomal subunit protein bL19 (118 aa).

Belongs to the bacterial ribosomal protein bL19 family.

Functionally, this protein is located at the 30S-50S ribosomal subunit interface and may play a role in the structure and function of the aminoacyl-tRNA binding site. The sequence is that of Large ribosomal subunit protein bL19 from Helicobacter acinonychis (strain Sheeba).